The following is a 477-amino-acid chain: Aspartyl/glutamyl-tRNA(Asn/Gln) amidotransferase subunit B (477 aa).

It belongs to the GatB/GatE family. GatB subfamily. As to quaternary structure, heterotrimer of A, B and C subunits.

The enzyme catalyses L-glutamyl-tRNA(Gln) + L-glutamine + ATP + H2O = L-glutaminyl-tRNA(Gln) + L-glutamate + ADP + phosphate + H(+). It carries out the reaction L-aspartyl-tRNA(Asn) + L-glutamine + ATP + H2O = L-asparaginyl-tRNA(Asn) + L-glutamate + ADP + phosphate + 2 H(+). In terms of biological role, allows the formation of correctly charged Asn-tRNA(Asn) or Gln-tRNA(Gln) through the transamidation of misacylated Asp-tRNA(Asn) or Glu-tRNA(Gln) in organisms which lack either or both of asparaginyl-tRNA or glutaminyl-tRNA synthetases. The reaction takes place in the presence of glutamine and ATP through an activated phospho-Asp-tRNA(Asn) or phospho-Glu-tRNA(Gln). The polypeptide is Aspartyl/glutamyl-tRNA(Asn/Gln) amidotransferase subunit B (Oenococcus oeni (strain ATCC BAA-331 / PSU-1)).